A 193-amino-acid polypeptide reads, in one-letter code: MIKRLVDIGAVKFGAFKLSSGLESPFYVDLRSVLGEPELFQWVIERYEAVLSGLEFDVIIGVATGGIPYASVLGYRLKKPMGYVRDEAKGYGTGRQIEGADVAGKRAAVVDDVLTTGKSVLNAIRAVRASGGEVAGVVVFLDRGQCGAEAVKREAGVYVYSVYKMRELLEELRPHIGEERYRSVLDYLSQWRC.

Residues Arg-85, Lys-89, and 111–119 (DDVLTTGKS) contribute to the 5-phospho-alpha-D-ribose 1-diphosphate site. Residues Thr-115 and Arg-143 each coordinate orotate.

The protein belongs to the purine/pyrimidine phosphoribosyltransferase family. PyrE subfamily. In terms of assembly, homodimer. It depends on Mg(2+) as a cofactor.

The catalysed reaction is orotidine 5'-phosphate + diphosphate = orotate + 5-phospho-alpha-D-ribose 1-diphosphate. It participates in pyrimidine metabolism; UMP biosynthesis via de novo pathway; UMP from orotate: step 1/2. In terms of biological role, catalyzes the transfer of a ribosyl phosphate group from 5-phosphoribose 1-diphosphate to orotate, leading to the formation of orotidine monophosphate (OMP). This chain is Orotate phosphoribosyltransferase, found in Pyrobaculum aerophilum (strain ATCC 51768 / DSM 7523 / JCM 9630 / CIP 104966 / NBRC 100827 / IM2).